The primary structure comprises 467 residues: MSFIHDDFLLSSKTARRFYHTFAEDQPILDYHCHLPPQDVAANRQFKDLFEIWLEGDHYKWRAMRANGVPESHCTGNAPAYEKFMAWAKTVPATLRNPLYHWTHLELKRYFGIDELLNEQSAARVWEQANAVLATPELTAHRILEKFHVKAVCTTDDPTDDLAAHQAIAASGLATKVFPTFRPDKALHVHAPELFNPWVDRLQVAADTHISTMAEFLDAIKKRHDFFHAMGGRLSDHGINHAFSDFPSEHEAARIFGRARCGHAATSEEHGKFAAYMMLVFGRLDAEKGWTKQLHLGARRNNSTRRFRELGADTGWDSIGDWPQADALGTYLDRLDLENALPKTVIYNLNPADNYVIATMIGNFQDGVTAGKVQFGSGWWFLDQKEAMQWQMNALSNCGMFSKFLGMLTDSRSFMSYPRHEYFRRVLCDLFGRDVENGELPDNDELIGPVIRDICYGNAQRFLGLNV.

This sequence belongs to the metallo-dependent hydrolases superfamily. Uronate isomerase family.

The enzyme catalyses D-glucuronate = D-fructuronate. It catalyses the reaction aldehydo-D-galacturonate = keto-D-tagaturonate. The protein operates within carbohydrate metabolism; pentose and glucuronate interconversion. The protein is Uronate isomerase of Solibacter usitatus (strain Ellin6076).